A 448-amino-acid polypeptide reads, in one-letter code: Microtubule-associated protein tau (448 aa).

A compositionally biased stretch (basic and acidic residues) spans 1-16 (MAEPRQEFDVMEDHAQ). The segment at 1–264 (MAEPRQEFDV…GPMPDLKNVK (264 aa)) is disordered. At A2 the chain carries N-acetylalanine. Y19 carries the post-translational modification Phosphotyrosine. Residue K33 forms a Glycyl lysine isopeptide (Lys-Gly) (interchain with G-Cter in ubiquitin) linkage. Residues S35 and S50 each carry the phosphoserine modification. Residues 50–60 (SETSDAKSTPT) are compositionally biased toward polar residues. Residues T58 and T60 each carry the phosphothreonine modification. Residues 71–89 (EGAPGEQAAAQAPAEIPEG) show a composition bias toward low complexity. T100 carries the post-translational modification Phosphothreonine. Residues 119 to 135 (KGKDGTGPDDKKTKGAD) show a composition bias toward basic and acidic residues. At T144 the chain carries Phosphothreonine. At R146 the chain carries Omega-N-methylarginine. An N6,N6-dimethyllysine; alternate modification is found at K154. K154 bears the N6-acetyllysine; alternate mark. Residues T160, T166, T167, and T172 each carry the phosphothreonine modification. A compositionally biased stretch (low complexity) spans 163–176 (PAKTTPTPKTSPAT). A compositionally biased stretch (basic and acidic residues) spans 189-200 (KSERGESGKSGD). Phosphoserine occurs at positions 198 and 202. Low complexity predominate over residues 201-221 (RSGYSSPGSPGTPGSRSRTPS). Y204 is subject to Phosphotyrosine. 3 positions are modified to phosphoserine: S205, S206, and S209. 2 positions are modified to phosphothreonine: T212 and T219. S221 bears the Phosphoserine mark. A Phosphothreonine modification is found at T224. K232 bears the N6-acetyllysine mark. At T238 the chain carries Phosphothreonine. Phosphoserine is present on residues S242 and S244. Tau/MAP repeat units follow at residues 251-281 (QAAP…GGGK), 282-312 (VQII…GGGS), 313-343 (VQIV…GGGQ), and 344-375 (VEVK…GGGN). A Glycyl lysine isopeptide (Lys-Gly) (interchain with G-Cter in ubiquitin) cross-link involves residue K261. K266 carries the post-translational modification N6-acetyllysine; alternate. Position 266 is an N6-methyllysine; alternate (K266). K266 is covalently cross-linked (Glycyl lysine isopeptide (Lys-Gly) (interchain with G-Cter in ubiquitin); alternate). S269 is modified (phosphoserine). K274 is covalently cross-linked (Glycyl lysine isopeptide (Lys-Gly) (interchain with G-Cter in ubiquitin)). The residue at position 288 (K288) is an N6-acetyllysine; alternate. Residue K288 forms a Glycyl lysine isopeptide (Lys-Gly) (interchain with G-Cter in ubiquitin); alternate linkage. S292 and S296 each carry phosphoserine. N6-acetyllysine is present on K297. C298 and C329 are disulfide-bonded. S300 is subject to Phosphoserine. K305 bears the N6-acetyllysine; alternate mark. K305 is covalently cross-linked (Glycyl lysine isopeptide (Lys-Gly) (interchain with G-Cter in ubiquitin); alternate). S312 bears the Phosphoserine mark. The residue at position 318 (K318) is an N6,N6-dimethyllysine; alternate. An N6-acetyllysine; alternate mark is found at K318, K324, and K328. Residues K318, K324, and K328 each participate in a glycyl lysine isopeptide (Lys-Gly) (interchain with G-Cter in ubiquitin); alternate cross-link. S331 is modified (phosphoserine). An N6-acetyllysine; alternate mark is found at K338, K350, and K354. Residues K338, K350, and K354 each participate in a glycyl lysine isopeptide (Lys-Gly) (interchain with G-Cter in ubiquitin); alternate cross-link. The residue at position 356 (R356) is an Omega-N-methylarginine. Residue S359 is modified to Phosphoserine. A Glycyl lysine isopeptide (Lys-Gly) (interchain with G-Cter in ubiquitin) cross-link involves residue K360. A Phosphoserine modification is found at S363. N6-acetyllysine; alternate is present on K376. Residue K376 forms a Glycyl lysine isopeptide (Lys-Gly) (interchain with G-Cter in ubiquitin); alternate linkage. K382 is covalently cross-linked (Glycyl lysine isopeptide (Lys-Gly) (interchain with G-Cter in ubiquitin)). Residue K392 is modified to N6-acetyllysine; alternate. K392 is covalently cross-linked (Glycyl lysine isopeptide (Lys-Gly) (interchain with G-Cter in ubiquitin); alternate). Residue Y401 is modified to Phosphotyrosine. 2 positions are modified to phosphoserine: S403 and S407. Residues 405–424 (VVSGDTSPRHLSNVSSTGSI) are disordered. A compositionally biased stretch (polar residues) spans 408-423 (GDTSPRHLSNVSSTGS). T410 is modified (phosphothreonine). 4 positions are modified to phosphoserine: S411, S416, S423, and S429. T434 bears the Phosphothreonine mark.

Interacts with MARK1, MARK2, MARK3 and MARK4. Interacts with SQSTM1 when polyubiquitinated. Interacts with PSMC2 through SQSTM1. Interacts with FKBP4. Binds to CSNK1D. Interacts with SGK1. Interacts with PIN1. Interacts with LRRK2. Interacts with LRP1, leading to endocytosis; this interaction is reduced in the presence of LRPAP1/RAP. Post-translationally, polyubiquitinated. Requires functional TRAF6 and may provoke SQSTM1-dependent degradation by the proteasome. In terms of processing, phosphorylation at various serine and threonine residues in S-P or T-P motifs by proline-directed protein kinases (PDPK1, CDK1, CDK5, GSK3, MAPK) (a few sites per protein in interphase, more in mitosis), and at serine residues in K-X-G-S motifs by MAP/microtubule affinity-regulating kinase (MARK1, MARK2, MARK3, MARK4), causing detachment from microtubules, and their disassembly. Phosphorylation at Ser-269 by BRSK1 and BRSK2 in neurons affects ability to bind microtubules and plays a role in neuron polarization. Phosphorylated by PHK. Dephosphorylation at several serine and threonine residues by the serine/threonine phosphatase PPP5C. O-glycosylated; contains at least 4 GlcNAc. Site-specific or stoichiometric changes in glycosylation may modulate tau function and also play a role in PHF's formation. As to expression, expressed in neurons.

It is found in the cytoplasm. Its subcellular location is the cytosol. It localises to the cell membrane. The protein localises to the cytoskeleton. The protein resides in the cell projection. It is found in the axon. Its subcellular location is the dendrite. It localises to the secreted. Promotes microtubule assembly and stability, and might be involved in the establishment and maintenance of neuronal polarity. The C-terminus binds axonal microtubules while the N-terminus binds neural plasma membrane components, suggesting that tau functions as a linker protein between both. Axonal polarity is predetermined by tau localization (in the neuronal cell) in the domain of the cell body defined by the centrosome. The short isoforms allow plasticity of the cytoskeleton whereas the longer isoforms may preferentially play a role in its stabilization. This Bos taurus (Bovine) protein is Microtubule-associated protein tau (MAPT).